Reading from the N-terminus, the 935-residue chain is Disintegrin and metalloproteinase domain-containing protein 22 (935 aa).

The signal sequence occupies residues 1–24 (MHINGGPLASWICCVIGSIHLAHA). The propeptide occupies 25–227 (STRPENGGTS…QQTRSQRKKR (203 aa)). N-linked (GlcNAc...) asparagine glycans are attached at residues Asn167 and Asn210. At 228–736 (QTRRYPRNVE…NRDEGVISTN (509 aa)) the chain is on the extracellular side. Positions 241–440 (KYVELMIVND…GGGACLFNKP (200 aa)) constitute a Peptidase M12B domain. Disulfide bonds link Cys351–Cys435, Cys394–Cys419, Cys396–Cys403, Cys449–Cys479, Cys460–Cys476, Cys462–Cys468, Cys475–Cys496, Cys487–Cys493, Cys492–Cys518, Cys505–Cys525, Cys512–Cys544, Cys537–Cys549, Cys556–Cys607, Cys571–Cys637, Cys585–Cys595, Cys602–Cys665, and Cys659–Cys670. In terms of domain architecture, Disintegrin spans 446–533 (PPECGNGFVE…QCPANIHKLD (88 aa)). N-linked (GlcNAc...) asparagine glycosylation occurs at Asn521. N-linked (GlcNAc...) asparagine glycans are attached at residues Asn609 and Asn636. Asn677 carries an N-linked (GlcNAc...) asparagine glycan. One can recognise an EGF-like domain in the interval 677 to 713 (NFSTCLGSTNKICSGHGVCSNEVRCICDRFWTGEDCS). Cystine bridges form between Cys681/Cys695, Cys689/Cys701, and Cys703/Cys712. The helical transmembrane segment at 737–757 (IIIGAIAGTILVLALVLGITA) threads the bilayer. Residues 758-935 (WGYKNYRRER…QSARLWETSI (178 aa)) are Cytoplasmic-facing. The disordered stretch occupies residues 850–935 (VSDVCENGRP…QSARLWETSI (86 aa)). Positions 859–870 (PRSNSWQGNVTS) are enriched in polar residues. Positions 871-882 (SRKKLRGKRFRP) are enriched in basic residues. Residues 891–906 (SPAKSPSSSTGSIASS) are compositionally biased toward low complexity.

The precursor is cleaved by a furin endopeptidase. In terms of tissue distribution, low levels in adult tissues. Not detected in developing embryos.

The protein resides in the cell membrane. Functionally, probable ligand for integrin in the brain. This is a non catalytic metalloprotease-like protein. The polypeptide is Disintegrin and metalloproteinase domain-containing protein 22 (adam22) (Xenopus laevis (African clawed frog)).